Consider the following 1313-residue polypeptide: Angiotensin-converting enzyme (1313 aa).

Residues 1–35 (MGAASGQRGRWPLSPPLLMLSLLLLLLLPPSPAPA) form the signal peptide. Residues 36–1265 (LDPGLQPGNF…LEPQQARVGQ (1230 aa)) are Extracellular-facing. Asn-44, Asn-60, Asn-80, Asn-117, Asn-152, and Asn-166 each carry an N-linked (GlcNAc...) asparagine glycan. Peptidase M2 domains are found at residues 46-630 (SADE…LGWP) and 649-1228 (ETDE…LGWP). Cys-163 and Cys-171 are disulfide-bonded. Tyr-237 is a chloride binding site. N-linked (GlcNAc...) asparagine glycosylation occurs at Asn-324. Cys-365 and Cys-383 are joined by a disulfide. Zn(2+) is bound at residue His-396. Glu-397 (proton acceptor 1) is an active-site residue. Zn(2+)-binding residues include His-400 and Glu-424. Residue Asn-515 is glycosylated (N-linked (GlcNAc...) asparagine). His-526 (proton donor 1) is an active-site residue. Arg-535 provides a ligand contact to chloride. A disulfide bridge links Cys-551 with Cys-563. Residues Asn-683, Asn-701, Asn-720, and Asn-766 are each glycosylated (N-linked (GlcNAc...) asparagine). A disulfide bond links Cys-763 and Cys-769. Positions 797 and 835 each coordinate chloride. An N-linked (GlcNAc...) asparagine glycan is attached at Asn-948. Residues Cys-963 and Cys-981 are joined by a disulfide bond. His-994 is a binding site for Zn(2+). The active-site Proton acceptor 2 is the Glu-995. Zn(2+) contacts are provided by His-998 and Glu-1022. Residues Trp-1096 and Arg-1100 each coordinate chloride. His-1124 acts as the Proton donor 2 in catalysis. Arg-1133 contributes to the chloride binding site. The cysteines at positions 1149 and 1161 are disulfide-linked. N-linked (GlcNAc...) asparagine glycosylation occurs at Asn-1197. A juxtamembrane stalk region spans residues 1221 to 1262 (HGETLGWPEYTWTPNTARAEGSLPESSRVNFLGMYLEPQQAR). The chain crosses the membrane as a helical span at residues 1266 to 1282 (WVLLFLGVALLVATVGL). The Cytoplasmic portion of the chain corresponds to 1283–1313 (AHRLYNIHNHHSLRRPHRGPQFGSEVELRHS). Ser-1306 is subject to Phosphoserine.

Belongs to the peptidase M2 family. As to quaternary structure, monomer and homodimer; homodimerizes following binding to an inhibitor. Interacts with calmodulin (CALM1, CALM2 or CALM3); interaction takes place in the cytoplasmic region and regulates phosphorylation and proteolytic cleavage. Zn(2+) serves as cofactor. It depends on chloride as a cofactor. Post-translationally, produced following proteolytic cleavage by secretase enzymes that cleave the transmembrane form in the juxtamembrane stalk region upstream of the transmembrane region. Cleavage can take place at different sites of the juxtamembrane stalk region. Phosphorylated by CK2 on Ser-1306; which allows membrane retention. Phosphorylated on tyrosine residues on its extracellular part, promoting cleavage by secretase enzymes and formation of the soluble form (Angiotensin-converting enzyme, soluble form). As to expression, expressed in brain, kidney, lung, skeletal muscle and heart. Testis-specific isoform is expressed in spermatocytes, adult testis.

The protein localises to the cell membrane. It localises to the cytoplasm. It is found in the secreted. It carries out the reaction Release of a C-terminal dipeptide, oligopeptide-|-Xaa-Yaa, when Xaa is not Pro, and Yaa is neither Asp nor Glu. Thus, conversion of angiotensin I to angiotensin II, with increase in vasoconstrictor activity, but no action on angiotensin II.. The enzyme catalyses angiotensin I + H2O = L-histidyl-L-leucine + angiotensin II. It catalyses the reaction bradykinin + H2O = L-Phe-L-Arg + bradykinin(1-7). The catalysed reaction is substance P + H2O = substance P(1-9) + L-Leu-L-Met-NH2. It carries out the reaction substance P + H2O = substance P(1-8) + Gly-L-Leu-L-Met-NH2. The enzyme catalyses substance P + H2O = L-Phe-L-Phe-Gly-L-Leu-L-Met-NH2 + substance P(1-6). It catalyses the reaction neurotensin + H2O = neurotensin(1-11) + L-isoleucyl-L-leucine. The catalysed reaction is goralatide + H2O = N-acetyl-L-seryl-L-aspartate + L-lysyl-L-proline. It carries out the reaction Met-enkephalin + H2O = L-phenylalanyl-L-methionine + L-tyrosylglycylglycine. The enzyme catalyses Leu-enkephalin + H2O = L-tyrosylglycylglycine + L-phenylalanyl-L-leucine. It catalyses the reaction Met-enkephalin-Arg-Phe + H2O = L-arginyl-L-phenylalanine + Met-enkephalin. With respect to regulation, the dipeptidyl carboxypeptidase activity is strongly activated by chloride. The dipeptidyl carboxypeptidase activity is specifically inhibited by lisinopril, captopril and enalaprilat. Strongly inhibited by lisinopril and captopril. In terms of biological role, dipeptidyl carboxypeptidase that removes dipeptides from the C-terminus of a variety of circulating hormones, such as angiotensin I, bradykinin or enkephalins, thereby playing a key role in the regulation of blood pressure, electrolyte homeostasis or synaptic plasticity. Composed of two similar catalytic domains, each possessing a functional active site, with different selectivity for substrates. Plays a major role in the angiotensin-renin system that regulates blood pressure and sodium retention by the kidney by converting angiotensin I to angiotensin II, resulting in an increase of the vasoconstrictor activity of angiotensin. Also able to inactivate bradykinin, a potent vasodilator, and therefore enhance the blood pressure response. Acts as a regulator of synaptic transmission by mediating cleavage of neuropeptide hormones, such as substance P, neurotensin or enkephalins. Catalyzes degradation of different enkephalin neuropeptides (Met-enkephalin, Leu-enkephalin, Met-enkephalin-Arg-Phe and possibly Met-enkephalin-Arg-Gly-Leu). Acts as a regulator of synaptic plasticity in the nucleus accumbens of the brain by mediating cleavage of Met-enkephalin-Arg-Phe, a strong ligand of Mu-type opioid receptor OPRM1, into Met-enkephalin. Met-enkephalin-Arg-Phe cleavage by ACE decreases activation of OPRM1, leading to long-term synaptic potentiation of glutamate release. Also acts as a regulator of hematopoietic stem cell differentiation by mediating degradation of hemoregulatory peptide N-acetyl-SDKP (AcSDKP). Acts as a regulator of cannabinoid signaling pathway by mediating degradation of hemopressin, an antagonist peptide of the cannabinoid receptor CNR1. Involved in amyloid-beta metabolism by catalyzing degradation of Amyloid-beta protein 40 and Amyloid-beta protein 42 peptides, thereby preventing plaque formation. Catalyzes cleavage of cholecystokinin (maturation of Cholecystokinin-8 and Cholecystokinin-5) and Gonadoliberin-1 (both maturation and degradation) hormones. Degradation of hemoregulatory peptide N-acetyl-SDKP (AcSDKP) and amyloid-beta proteins is mediated by the N-terminal catalytic domain, while angiotensin I and cholecystokinin cleavage is mediated by the C-terminal catalytic region. Soluble form that is released in blood plasma and other body fluids following proteolytic cleavage in the juxtamembrane stalk region. Functionally, isoform produced by alternative promoter usage that is specifically expressed in spermatocytes and adult testis, and which is required for male fertility. In contrast to somatic isoforms, only contains one catalytic domain. Acts as a dipeptidyl carboxypeptidase that removes dipeptides from the C-terminus of substrates. The identity of substrates that are needed for male fertility is unknown. May also have a glycosidase activity which releases GPI-anchored proteins from the membrane by cleaving the mannose linkage in the GPI moiety. The GPIase activity was reported to be essential for the egg-binding ability of the sperm. This activity is however unclear and has been challenged by other groups, suggesting that it may be indirect. The sequence is that of Angiotensin-converting enzyme from Rattus norvegicus (Rat).